Reading from the N-terminus, the 146-residue chain is Large ribosomal subunit protein uL15 (146 aa).

Residues 1–54 (MNLTDLRPADGSKQSGNFRRGRGHGSGNGKTAGKGHKGQKARSGAPRVGFEGGQ) form a disordered region.

Belongs to the universal ribosomal protein uL15 family. In terms of assembly, part of the 50S ribosomal subunit.

Functionally, binds to the 23S rRNA. In Lachnoclostridium phytofermentans (strain ATCC 700394 / DSM 18823 / ISDg) (Clostridium phytofermentans), this protein is Large ribosomal subunit protein uL15.